Reading from the N-terminus, the 326-residue chain is Ribosomal RNA small subunit methyltransferase H (326 aa).

Residues 45–47 (GGH), Asp-65, Asp-113, and Gln-120 contribute to the S-adenosyl-L-methionine site. The interval 299 to 326 (PSAEEITRNPRSRSARLRAAERIAHDGR) is disordered. Residues 316–326 (RAAERIAHDGR) are compositionally biased toward basic and acidic residues.

This sequence belongs to the methyltransferase superfamily. RsmH family.

It is found in the cytoplasm. It catalyses the reaction cytidine(1402) in 16S rRNA + S-adenosyl-L-methionine = N(4)-methylcytidine(1402) in 16S rRNA + S-adenosyl-L-homocysteine + H(+). Functionally, specifically methylates the N4 position of cytidine in position 1402 (C1402) of 16S rRNA. The sequence is that of Ribosomal RNA small subunit methyltransferase H from Thermomicrobium roseum (strain ATCC 27502 / DSM 5159 / P-2).